The chain runs to 86 residues: Cardiotoxin homolog TA-ctx-like (86 aa).

A signal peptide spans 1–21; the sequence is MKTLLLTLVVLTIACLDLGYT. Intrachain disulfides connect Cys24-Cys45, Cys38-Cys62, Cys66-Cys78, and Cys79-Cys84.

This sequence belongs to the three-finger toxin family. Short-chain subfamily. Orphan group IX sub-subfamily. Expressed by the venom gland.

It is found in the secreted. The protein is Cardiotoxin homolog TA-ctx-like of Bungarus multicinctus (Many-banded krait).